The primary structure comprises 447 residues: Argininosuccinate synthase (447 aa).

Residues 17–25 (AFSGGLDTS) and Ala-43 each bind ATP. Position 99 (Tyr-99) interacts with L-citrulline. Gly-129 and Thr-131 together coordinate ATP. L-aspartate contacts are provided by Thr-131, Asn-135, and Asp-136. Asn-135 contributes to the L-citrulline binding site. Asp-136 lines the ATP pocket. L-citrulline is bound by residues Arg-139 and Ser-192. Asp-194 is a binding site for ATP. Positions 201, 203, and 280 each coordinate L-citrulline.

It belongs to the argininosuccinate synthase family. Type 2 subfamily. Homotetramer.

It is found in the cytoplasm. The catalysed reaction is L-citrulline + L-aspartate + ATP = 2-(N(omega)-L-arginino)succinate + AMP + diphosphate + H(+). It participates in amino-acid biosynthesis; L-arginine biosynthesis; L-arginine from L-ornithine and carbamoyl phosphate: step 2/3. This Escherichia coli O157:H7 protein is Argininosuccinate synthase (argG).